A 173-amino-acid polypeptide reads, in one-letter code: NAD(P)H-quinone oxidoreductase subunit I, chloroplastic (173 aa).

4Fe-4S ferredoxin-type domains are found at residues 55–84 (GRIH…VDWD) and 95–124 (RSYS…MTEE). The [4Fe-4S] cluster site is built by Cys-64, Cys-67, Cys-70, Cys-74, Cys-104, Cys-107, Cys-110, and Cys-114.

The protein belongs to the complex I 23 kDa subunit family. In terms of assembly, NDH is composed of at least 16 different subunits, 5 of which are encoded in the nucleus. It depends on [4Fe-4S] cluster as a cofactor.

The protein resides in the plastid. It localises to the chloroplast thylakoid membrane. It catalyses the reaction a plastoquinone + NADH + (n+1) H(+)(in) = a plastoquinol + NAD(+) + n H(+)(out). The enzyme catalyses a plastoquinone + NADPH + (n+1) H(+)(in) = a plastoquinol + NADP(+) + n H(+)(out). Its function is as follows. NDH shuttles electrons from NAD(P)H:plastoquinone, via FMN and iron-sulfur (Fe-S) centers, to quinones in the photosynthetic chain and possibly in a chloroplast respiratory chain. The immediate electron acceptor for the enzyme in this species is believed to be plastoquinone. Couples the redox reaction to proton translocation, and thus conserves the redox energy in a proton gradient. The polypeptide is NAD(P)H-quinone oxidoreductase subunit I, chloroplastic (Nephroselmis olivacea (Green alga)).